We begin with the raw amino-acid sequence, 423 residues long: Immunity-related GTPase family M protein 3 (423 aa).

The IRG-type G domain occupies 83-260 (YRVKIAVTGD…PELRNTLQKD (178 aa)). Residues 92-99 (DSGNGMSS), 117-121 (TGVVR), and 200-202 (KLD) each bind GTP.

It belongs to the TRAFAC class dynamin-like GTPase superfamily. IRG family.

The protein localises to the endoplasmic reticulum. It is found in the cytoplasmic vesicle membrane. The protein resides in the lipid droplet. The catalysed reaction is GTP + H2O = GDP + phosphate + H(+). In terms of biological role, immunity-related GTPase that plays important roles in host resistance to acute infection by protozoan, such as Toxoplasma gondii and Leishmania major. Acts as a dynamin-like protein that binds to intracellular membranes and promotes remodeling and trafficking of those membranes. Acts predominantly to restrict acute protozoan infection: expression is required in both hematopoietic and non-hematopoietic cellular compartments and is dependent on Stat1. Only plays a partial role in the control of latent Toxoplasma infection. Involved in the clearance of acute protozoan infections by regulating autophagy, possibly by promoting the fusion of phagosomes with lysosomes for efficient degradation of vacuoles containing parasites. Probably involved in membrane disruption of parasite-containing vacuoles. In addition to its role in resistance to acute infection by protozoan, also acts as a negative regulator of the integrated stress response (ISR) following coxsackievirus B3 infection. Promotes differentiation of activated CD8(+) T-cells. The polypeptide is Immunity-related GTPase family M protein 3 (Mus musculus (Mouse)).